Consider the following 247-residue polypeptide: Adenosylcobinamide-GDP ribazoletransferase (247 aa).

A run of 5 helical transmembrane segments spans residues isoleucine 34–leucine 54, cysteine 59–phenylalanine 79, glycine 113–leucine 133, methionine 138–tyrosine 158, and valine 194–isoleucine 214.

This sequence belongs to the CobS family. The cofactor is Mg(2+).

The protein resides in the cell inner membrane. The catalysed reaction is alpha-ribazole + adenosylcob(III)inamide-GDP = adenosylcob(III)alamin + GMP + H(+). It catalyses the reaction alpha-ribazole 5'-phosphate + adenosylcob(III)inamide-GDP = adenosylcob(III)alamin 5'-phosphate + GMP + H(+). The protein operates within cofactor biosynthesis; adenosylcobalamin biosynthesis; adenosylcobalamin from cob(II)yrinate a,c-diamide: step 7/7. Joins adenosylcobinamide-GDP and alpha-ribazole to generate adenosylcobalamin (Ado-cobalamin). Also synthesizes adenosylcobalamin 5'-phosphate from adenosylcobinamide-GDP and alpha-ribazole 5'-phosphate. This chain is Adenosylcobinamide-GDP ribazoletransferase, found in Salmonella typhi.